The primary structure comprises 599 residues: Adenine deaminase (599 aa).

It belongs to the metallo-dependent hydrolases superfamily. Adenine deaminase family. Requires Mn(2+) as cofactor.

It catalyses the reaction adenine + H2O + H(+) = hypoxanthine + NH4(+). The polypeptide is Adenine deaminase (Clostridium botulinum (strain Loch Maree / Type A3)).